The chain runs to 297 residues: MIPLSIRVPASTANVGPGFDSVGIALSLYLHVVVKEKSNKWQVIHSFDESIPTDDKNLIVSTACKVSPSLSPYIIEVTSNIPLTRGLGSSASAIVAGIELANQLGNLNLTTDQKVQIATNFEGHPDNVAASILGGTVIGALDGKNVSVVRIESKELGVISLIPNEELNTDESRSVLPDVFPFHEAVKASAISNVLVAALCQKKWEVVGEMMERDHFHEPYRLELVPLLPSIRKCAKEFGAYGTALSGAGPSIFILTPYEKRQEIAEQLARVFTSMKVCELEIDHTGITVNKEERIEL.

82-92 (PLTRGLGSSAS) lines the ATP pocket.

This sequence belongs to the GHMP kinase family. Homoserine kinase subfamily.

It is found in the cytoplasm. The enzyme catalyses L-homoserine + ATP = O-phospho-L-homoserine + ADP + H(+). It participates in amino-acid biosynthesis; L-threonine biosynthesis; L-threonine from L-aspartate: step 4/5. In terms of biological role, catalyzes the ATP-dependent phosphorylation of L-homoserine to L-homoserine phosphate. This chain is Homoserine kinase, found in Bacillus cereus (strain ATCC 10987 / NRS 248).